The following is a 1004-amino-acid chain: Phyllocladan-16-alpha-ol synthase (1004 aa).

A DXDD motif motif is present at residues 321-324 (DADD). Mg(2+) is bound by residues Asp-667, Glu-671, Asn-872, Asp-873, Ser-876, and Asp-880. A DEXXE motif motif is present at residues 667–671 (DEFME).

This sequence belongs to the terpene synthase family. Mg(2+) serves as cofactor.

The catalysed reaction is (2E,6E,10E)-geranylgeranyl diphosphate = (+)-copalyl diphosphate. The enzyme catalyses (+)-copalyl diphosphate + H2O = phyllocladan-16alpha-ol + diphosphate. Functionally, involved in the synthesis of labdane-related hydrocarbons by catalyzing the conversion of geranylgeranyl diphosphate (GGDP) to phyllocladan-16-alpha-ol in a two step via type B cyclization into a (+)-copalyl diphosphate ((+)-CDP) intermediate. This is Phyllocladan-16-alpha-ol synthase (PaDC1) from Phomopsis amygdali (Fusicoccum amygdali).